Consider the following 482-residue polypeptide: Protein nucleotidyltransferase YdiU (482 aa).

ATP contacts are provided by G88, G90, R91, K111, D123, G124, R174, and R181. D250 serves as the catalytic Proton acceptor. Residues N251 and D260 each contribute to the Mg(2+) site. An ATP-binding site is contributed by D260.

The protein belongs to the SELO family. Mg(2+) serves as cofactor. Requires Mn(2+) as cofactor.

The catalysed reaction is L-seryl-[protein] + ATP = 3-O-(5'-adenylyl)-L-seryl-[protein] + diphosphate. It carries out the reaction L-threonyl-[protein] + ATP = 3-O-(5'-adenylyl)-L-threonyl-[protein] + diphosphate. The enzyme catalyses L-tyrosyl-[protein] + ATP = O-(5'-adenylyl)-L-tyrosyl-[protein] + diphosphate. It catalyses the reaction L-histidyl-[protein] + UTP = N(tele)-(5'-uridylyl)-L-histidyl-[protein] + diphosphate. The catalysed reaction is L-seryl-[protein] + UTP = O-(5'-uridylyl)-L-seryl-[protein] + diphosphate. It carries out the reaction L-tyrosyl-[protein] + UTP = O-(5'-uridylyl)-L-tyrosyl-[protein] + diphosphate. Functionally, nucleotidyltransferase involved in the post-translational modification of proteins. It can catalyze the addition of adenosine monophosphate (AMP) or uridine monophosphate (UMP) to a protein, resulting in modifications known as AMPylation and UMPylation. In Cronobacter sakazakii (strain ATCC BAA-894) (Enterobacter sakazakii), this protein is Protein nucleotidyltransferase YdiU.